The sequence spans 246 residues: MRRVAIEFSYDGTDFFGYQIQNNVRTVQGELEKALEKVFKIHIDTYAAGRTDTGVHANGQVVSFDCPNDRLMENDIKNAINANLPGDIYIKKVWFTHPTFNPRYEAKRRIYHYYIDTSKSKNLFTRRYVWWFPYELDIEKMRIAAKYLIGEHDFISFSKKGEENTKTIRTINNLRIIEIKNGLILIRVEGISFLRGMVRSIVANLVRVGTGIWEPEKVKEVLESKDRSKSAGLAPAHGLFLYKVLF.

The active-site Nucleophile is D52. A substrate-binding site is contributed by Y111.

Belongs to the tRNA pseudouridine synthase TruA family. As to quaternary structure, homodimer.

The catalysed reaction is uridine(38/39/40) in tRNA = pseudouridine(38/39/40) in tRNA. Formation of pseudouridine at positions 38, 39 and 40 in the anticodon stem and loop of transfer RNAs. This Fervidobacterium nodosum (strain ATCC 35602 / DSM 5306 / Rt17-B1) protein is tRNA pseudouridine synthase A.